A 509-amino-acid chain; its full sequence is UDP-N-acetylmuramyl-tripeptide synthetase (509 aa).

Ser30 is a UDP-N-acetyl-alpha-D-muramoyl-L-alanyl-D-glutamate binding site. An ATP-binding site is contributed by 111–117 (GTDGKTT). Residues 155–156 (ST), Thr182, and Arg192 contribute to the UDP-N-acetyl-alpha-D-muramoyl-L-alanyl-D-glutamate site. N6-carboxylysine is present on Lys224.

Belongs to the MurCDEF family. MurE subfamily. Carboxylation is probably crucial for Mg(2+) binding and, consequently, for the gamma-phosphate positioning of ATP.

Its subcellular location is the cytoplasm. Its pathway is cell wall biogenesis; peptidoglycan biosynthesis. Its function is as follows. Catalyzes the addition of an amino acid to the nucleotide precursor UDP-N-acetylmuramoyl-L-alanyl-D-glutamate (UMAG) in the biosynthesis of bacterial cell-wall peptidoglycan. In Roseiflexus sp. (strain RS-1), this protein is UDP-N-acetylmuramyl-tripeptide synthetase.